The sequence spans 327 residues: DNA-directed RNA polymerase subunit alpha (327 aa).

An alpha N-terminal domain (alpha-NTD) region spans residues 1–233; it reads MVREKVKVST…NLFIPFLHVE (233 aa). The interval 267–327 is alpha C-terminal domain (alpha-CTD); the sequence is LAFQYIFIDQ…KKILDILEKK (61 aa).

It belongs to the RNA polymerase alpha chain family. In terms of assembly, in plastids the minimal PEP RNA polymerase catalytic core is composed of four subunits: alpha, beta, beta', and beta''. When a (nuclear-encoded) sigma factor is associated with the core the holoenzyme is formed, which can initiate transcription.

It localises to the plastid. It is found in the chloroplast. It carries out the reaction RNA(n) + a ribonucleoside 5'-triphosphate = RNA(n+1) + diphosphate. Its function is as follows. DNA-dependent RNA polymerase catalyzes the transcription of DNA into RNA using the four ribonucleoside triphosphates as substrates. The protein is DNA-directed RNA polymerase subunit alpha of Draba nemorosa (Woodland whitlowgrass).